The sequence spans 144 residues: MKFKYIVAVSFLIASAYARSEENDEQSLSQRDVLEEESLREIRGIGTKILGGLKTAVKGALKELASTYVNGKRTAEDHEVMKRLEAVMRDLDSLDYPEEASERETRGFNQEEIANLFTKKEKRILGPVIKTIGGVIGGLLKNLG.

An N-terminal signal peptide occupies residues 1–18 (MKFKYIVAVSFLIASAYA). Residues 19-43 (RSEENDEQSLSQRDVLEEESLREIR) constitute a propeptide that is removed on maturation. Position 70 is an asparagine amide (Asn70). The propeptide occupies 74–123 (TAEDHEVMKRLEAVMRDLDSLDYPEEASERETRGFNQEEIANLFTKKEKR). The residue at position 143 (Leu143) is a Leucine amide.

This sequence belongs to the bombinin family. Expressed by the skin glands.

It is found in the secreted. Its function is as follows. Maximin-8 shows antimicrobial activity against bacteria and against the fungus C.albicans. It has little hemolytic activity. Maximin-H7 shows antimicrobial activity against bacteria and against the fungus C.albicans. Shows strong hemolytic activity. The sequence is that of Maximins 8/H7 from Bombina maxima (Giant fire-bellied toad).